A 254-amino-acid chain; its full sequence is Probable glutathione transferase omega-2 (254 aa).

The GST N-terminal domain maps to 25–105 (GTIRIYNMRY…YLDDIYPEPR (81 aa)). Cys-35 (nucleophile) is an active-site residue. Glutathione contacts are provided by residues Lys-62, Val-75, and 89 to 90 (ES). A GST C-terminal domain is found at 110–239 (DHYEKVQQKL…SQPTETAVEF (130 aa)).

It belongs to the GST superfamily. Omega family.

The catalysed reaction is RX + glutathione = an S-substituted glutathione + a halide anion + H(+). It catalyses the reaction L-dehydroascorbate + 2 glutathione = glutathione disulfide + L-ascorbate. It carries out the reaction methylarsonate + 2 glutathione + H(+) = methylarsonous acid + glutathione disulfide + H2O. Functionally, exhibits glutathione-dependent thiol transferase activity. Has dehydroascorbate reductase activity and may contribute to the recycling of ascorbic acid. Participates in the biotransformation of inorganic arsenic and reduces monomethylarsonic acid (MMA). In Caenorhabditis elegans, this protein is Probable glutathione transferase omega-2 (gsto-2).